The sequence spans 345 residues: Annexin A9 (345 aa).

4 Annexin repeats span residues F41–Q112, P113–K184, N197–S266, and N270–R341.

The protein belongs to the annexin family. As to quaternary structure, homodimer.

In terms of biological role, may act as a low affinity receptor for acetylcholine. The polypeptide is Annexin A9 (Anxa9) (Mus musculus (Mouse)).